Reading from the N-terminus, the 199-residue chain is 5'-deoxynucleotidase ECA3034 (199 aa).

Substrate is bound by residues 18 to 19 (RW) and histidine 33. The HD domain maps to 30-142 (VSEHSLQVAF…VKQADALCAY (113 aa)). A divalent metal cation contacts are provided by histidine 33, histidine 68, and aspartate 69. Substrate contacts are provided by residues aspartate 69, 77 to 80 (DMPT), and aspartate 137. Aspartate 137 lines the a divalent metal cation pocket.

Belongs to the 5DNU family. In terms of assembly, homodimer. The cofactor is a divalent metal cation.

It is found in the cytoplasm. The catalysed reaction is a 2'-deoxyribonucleoside 5'-phosphate + H2O = a 2'-deoxyribonucleoside + phosphate. Its function is as follows. Catalyzes the strictly specific dephosphorylation of 2'-deoxyribonucleoside 5'-monophosphates. The polypeptide is 5'-deoxynucleotidase ECA3034 (Pectobacterium atrosepticum (strain SCRI 1043 / ATCC BAA-672) (Erwinia carotovora subsp. atroseptica)).